A 338-amino-acid polypeptide reads, in one-letter code: Formamidase (338 aa).

Positions 15–257 (VVIGLAQLAL…DEIVCCELRP (243 aa)) constitute a CN hydrolase domain. E61 serves as the catalytic Proton acceptor. The active-site Proton donor is the K130. Residue C163 is the Nucleophile of the active site.

Belongs to the carbon-nitrogen hydrolase superfamily. Aliphatic amidase family.

It catalyses the reaction formamide + H2O = formate + NH4(+). Functionally, is an aliphatic amidase with a restricted substrate specificity, as it only hydrolyzes formamide. The chain is Formamidase from Pseudomonas syringae pv. syringae (strain B728a).